Here is a 581-residue protein sequence, read N- to C-terminus: Pectinesterase 3 (581 aa).

Positions 1–55 (MDTIKSFKGYGKVNELEQQAYEKKTRKRLIIIAVSSIVLIAVIIAAVAGVVIHNR) are cleaved as a signal peptide. N-linked (GlcNAc...) asparagine glycans are attached at residues N101, N156, N200, N217, and N268. Positions 348 and 378 each coordinate substrate. The active-site Proton donor is the D401. C415 and C435 form a disulfide bridge. Catalysis depends on D422, which acts as the Nucleophile. N477 carries N-linked (GlcNAc...) asparagine glycosylation. Residues R486 and W488 each contribute to the substrate site.

In the N-terminal section; belongs to the PMEI family. The protein in the C-terminal section; belongs to the pectinesterase family.

It localises to the secreted. The protein resides in the cell wall. It carries out the reaction [(1-&gt;4)-alpha-D-galacturonosyl methyl ester](n) + n H2O = [(1-&gt;4)-alpha-D-galacturonosyl](n) + n methanol + n H(+). It participates in glycan metabolism; pectin degradation; 2-dehydro-3-deoxy-D-gluconate from pectin: step 1/5. May have roles in the deposition of pectin in developing tissues and in the wall loosening and cell separation that occurs in cell expansion, fruit ripening and abscission. The protein is Pectinesterase 3 (MPE3) of Phaseolus vulgaris (Kidney bean).